We begin with the raw amino-acid sequence, 486 residues long: Protein nucleotidyltransferase YdiU (486 aa).

G89, G91, R92, K112, D124, G125, R175, and R182 together coordinate ATP. D251 acts as the Proton acceptor in catalysis. Mg(2+) is bound by residues N252 and D261. D261 serves as a coordination point for ATP.

Belongs to the SELO family. The cofactor is Mg(2+). It depends on Mn(2+) as a cofactor.

It catalyses the reaction L-seryl-[protein] + ATP = 3-O-(5'-adenylyl)-L-seryl-[protein] + diphosphate. The enzyme catalyses L-threonyl-[protein] + ATP = 3-O-(5'-adenylyl)-L-threonyl-[protein] + diphosphate. The catalysed reaction is L-tyrosyl-[protein] + ATP = O-(5'-adenylyl)-L-tyrosyl-[protein] + diphosphate. It carries out the reaction L-histidyl-[protein] + UTP = N(tele)-(5'-uridylyl)-L-histidyl-[protein] + diphosphate. It catalyses the reaction L-seryl-[protein] + UTP = O-(5'-uridylyl)-L-seryl-[protein] + diphosphate. The enzyme catalyses L-tyrosyl-[protein] + UTP = O-(5'-uridylyl)-L-tyrosyl-[protein] + diphosphate. Nucleotidyltransferase involved in the post-translational modification of proteins. It can catalyze the addition of adenosine monophosphate (AMP) or uridine monophosphate (UMP) to a protein, resulting in modifications known as AMPylation and UMPylation. The chain is Protein nucleotidyltransferase YdiU from Shouchella clausii (strain KSM-K16) (Alkalihalobacillus clausii).